The primary structure comprises 500 residues: MDFRVKSGRLEKQRSACIVAGVFESRQFSFIAEQLDKISKGYISALLRSGELEGQVGQVLLLYHVPYIMSKRVLLIGCGKKRELDERKYKKIIINTVNALNNTGSIEAMCFLTELQVQGKNTYWKIRQAVEIAHNLCYTFDKFKKTKKISYQLRRITFNITNRRELTSSKCALQHGIAIAAGIKAAKDLANMPPNICNSAYLASKAHELANSNKHINASVLGKQQMKELGMNAYLAVGQGSANESLMSIIEYQGHLDSKARPIVLVGKGLTFDSGGISIKPSNKMNEMKYDMCGAATVYGVMRVVLSLNLPLNIIGVLAGCENMVDSCSFRPGDVLTTLSGQTVEVLNTDAEGRLVLCDTLTYIERFNPEIVIDIATLTGACVIALGHHFTGMMSNHNPLSNELSSAAEQAGDYIWPLPLSNEFHEELDSHCADMTNVGGSAGGAITAGCFLSRFTSKYHWAHLDIAGTAWNTEKHQGATGRPVAMLSQFLINRSISDNK.

The Mn(2+) site is built by Lys-268 and Asp-273. Lys-280 is a catalytic residue. Residues Asp-291, Asp-350, and Glu-352 each coordinate Mn(2+). Arg-354 is an active-site residue.

Belongs to the peptidase M17 family. Mn(2+) serves as cofactor.

It is found in the cytoplasm. It carries out the reaction Release of an N-terminal amino acid, Xaa-|-Yaa-, in which Xaa is preferably Leu, but may be other amino acids including Pro although not Arg or Lys, and Yaa may be Pro. Amino acid amides and methyl esters are also readily hydrolyzed, but rates on arylamides are exceedingly low.. It catalyses the reaction Release of an N-terminal amino acid, preferentially leucine, but not glutamic or aspartic acids.. Presumably involved in the processing and regular turnover of intracellular proteins. Catalyzes the removal of unsubstituted N-terminal amino acids from various peptides. This is Probable cytosol aminopeptidase from Baumannia cicadellinicola subsp. Homalodisca coagulata.